The sequence spans 299 residues: MNNIIDGKKLAEEIIVKVKAETIKLRNNYKIQPGIAVIIVGDDPASHVYVTSKSKKAEECGFFSIKHMLSKETSEKELLQLIATLNSDPKIHGILVQLPLPAHINTNCVTQAIAFQKDVDGFHYINIGKLSCNTLEDAIIPCTPAGAMIMIEQQCGRDLSGLDAVVVGRSNIVGKPMAALLTAANATVTIAHSRTRDLDDVCRSADILVAAVGRPQIIKKDWVKNGAIVIDVGINRIAAPEKGIGKTRLVGDVDFEAIKGKTAAITPVPGGVGPMTIAMLMVNTLNAAARLYNLPVLKL.

NADP(+)-binding positions include 168 to 170 (GRS), Ser193, and Ile234.

It belongs to the tetrahydrofolate dehydrogenase/cyclohydrolase family. In terms of assembly, homodimer.

It catalyses the reaction (6R)-5,10-methylene-5,6,7,8-tetrahydrofolate + NADP(+) = (6R)-5,10-methenyltetrahydrofolate + NADPH. It carries out the reaction (6R)-5,10-methenyltetrahydrofolate + H2O = (6R)-10-formyltetrahydrofolate + H(+). The protein operates within one-carbon metabolism; tetrahydrofolate interconversion. Catalyzes the oxidation of 5,10-methylenetetrahydrofolate to 5,10-methenyltetrahydrofolate and then the hydrolysis of 5,10-methenyltetrahydrofolate to 10-formyltetrahydrofolate. The protein is Bifunctional protein FolD of Bartonella quintana (strain Toulouse) (Rochalimaea quintana).